Here is a 493-residue protein sequence, read N- to C-terminus: Zinc finger CCCH domain-containing protein 34 (493 aa).

3 consecutive C3H1-type zinc fingers follow at residues 14 to 43 (RRCNTDCVYFLASPFTCTKGSKCEYRHADG), 45 to 71 (RFNRRNCWYWFKGNCVNPSCTFRHPPL), and 91 to 118 (VKAANPCYFYYNSHCSKGDNCPYLHEPL). Residues 397-477 (MGECPQPANH…SFSDDFEGPK (81 aa)) form a disordered region. Over residues 409-420 (FRGRRKKNRGKQ) the composition is skewed to basic residues. The segment covering 452–468 (SNSSFSHSTACTPNVRS) has biased composition (polar residues).

In Oryza sativa subsp. japonica (Rice), this protein is Zinc finger CCCH domain-containing protein 34.